We begin with the raw amino-acid sequence, 1400 residues long: MKDLLGLLKSQGQSDEFDAIRIGLASPDMIRSWSYGEVKKPETINYRTFKPERDGLFCAKIFGPIKDYECLCGKYKRLKHRGVICEKCGVEVALSKVRRERMGHIELASPVAHIWFLKSLPSRIGLILDMTLRDIERVLYFESFIVIDPGMTTLDKGQLLNDEQYFEALEEFGDEFDARMGAEAVQMLLRDLDMPVEINSMREELNSTNSETRIKKLSKRLKLVEAFYHSGNNPEWMVLDVLPVLPPDLRPLVPLEGGRFATSDLNDLYRRVINRNNRLKRLLELSAPDIIVRNEKRMLQESVDALLDNGRRGRAITGSNKRPLKSLADMIKGKQGRFRQNLLGKRVDYSGRSVITVGPSLRLHQCGLPKKMALELFKPFIFSKLELRGMATTIKAAKKMVERETPEVWDILDEVIREHPVMLNRAPTLHRLGIQAFEPMLIEGKAIQLHPLVCAAYNADFDGDQMAVHVPLTIEAQLEARALMMSTNNILSPANGEPIIVPSQDVVLGLYYMTREKINAKGEGMAFSDIKEVHRAYGAKQVELHAKVKVRISQVDTTLDGDKVPSTFIADTTVGRALLFDIVPDGLPFSVVNQTMKKKAISNLINECYRKVGLKESCIFADQLMYTGFAYATASGSSVGVDDFVIPPEKAAIIAKAEAEVKEIEYQYADGLVTQGEKYNKVIDLWSRTNETVTEAMMKNLAKEMTVNKAGETVEQQSFNSVYMMADSGARGSVAQMRQLGGMRGLMAKPDGSIIETPITANFREGLSVLQYFTSTHGARKGLADTALKTANSGYLTRRLVDVAQDLVITEVDCGSTNGISVAAMIEGGDVVVPLGHRVLGRVVAQDVIDGKGDFVLAAGTLIDEHDVRTIEAAGVDEMIIRSVITCNTRHGVCAKCYGRDLARGHQVNIGEAIGVVAAQSIGEPGTQLTMRTFHIGGAASRASAIDSVQVKSAGTVRFNKMKSIERHTGHLVVASRSSELAIADEAGREKERYKLPYGAVLSVREGDQVTAGQIVANWDPHTHPIVSEMEGRLEFSGMEENVTIRRQSDEMTGLTTIEVMEMRDRPAAGKDIRPMIAVVDAEGNPVLIPGTESPVQYMLPEKALLSLDHGATVKSGEVLARIPQESIGNKDITGGLPRVADLFEARRPKDPAVMAETSGVVSFGKETKGKIRLVITPQNGDEPVETLIPKWRQINIFDGEEVAKGEIIADGPLSPHDILRLQGVEALADYITNEVQEVYRLQGVVINDKHIEVIVNQMLRKVEVGESGDTDLIQGDQVEYTHLLDANEKAEAEGKFPAKFERVLLGITKASLATESFISAASFQETTRVLTEGAVTGKKDHLRGLKENVVVGRLIPAGTGLAYHNERKRKKELALAAKEGSSTVSASDVEEALSAALKD.

Residues Cys-70, Cys-72, Cys-85, and Cys-88 each contribute to the Zn(2+) site. Residues Asp-460, Asp-462, and Asp-464 each contribute to the Mg(2+) site. The Zn(2+) site is built by Cys-814, Cys-887, Cys-894, and Cys-897.

This sequence belongs to the RNA polymerase beta' chain family. As to quaternary structure, the RNAP catalytic core consists of 2 alpha, 1 beta, 1 beta' and 1 omega subunit. When a sigma factor is associated with the core the holoenzyme is formed, which can initiate transcription. Mg(2+) serves as cofactor. Zn(2+) is required as a cofactor.

The catalysed reaction is RNA(n) + a ribonucleoside 5'-triphosphate = RNA(n+1) + diphosphate. Functionally, DNA-dependent RNA polymerase catalyzes the transcription of DNA into RNA using the four ribonucleoside triphosphates as substrates. The protein is DNA-directed RNA polymerase subunit beta' of Marinomonas sp. (strain MWYL1).